A 260-amino-acid chain; its full sequence is Transmembrane protein 70, mitochondrial (260 aa).

Residues 1–81 (MLFLALGSPW…PVYWEGYVRF (81 aa)) constitute a mitochondrion transit peptide. Residues 82 to 102 (LNTPSDKSEDGRLIYTGNMAR) lie on the Mitochondrial matrix side of the membrane. A helical membrane pass occupies residues 103 to 123 (AVFGVKCFSYSTSLIGLTFLP). Over 124 to 141 (YIFTQNNAISESVPLPIQ) the chain is Mitochondrial intermembrane. A helical membrane pass occupies residues 142 to 162 (IIFYGIMGSFTVITPVLLHFI). Over 163–260 (TKGYVIRLYH…SEEKRHKDDK (98 aa)) the chain is Mitochondrial matrix.

This sequence belongs to the TMEM70 family. Homooligomer. Interacts (homooligomer form) with ATP5MC1; this interaction facilitates the oligomer formation of subunit c/ATP5MC1 (c-ring) and the c-ring membrane insertion and also protects ATP5MC1 against intramitochondrial proteolysis. Interacts with the core subunits TMEM126B, NDUFAF1, ECSIT and ACAD9 of the MCIA complex. Interacts with ATP5MC3, TMEM242 and TIMMDC1. In terms of tissue distribution, lower expressed in the heart than in the liver (at protein level).

Its subcellular location is the mitochondrion inner membrane. In terms of biological role, scaffold protein that participates in the c-ring assembly of mitochondrial ATP synthase (F(1)F(0) ATP synthase or complex V) by facilitating the membrane insertion and oligomer formation of the subunit c/ATP5MC1 through its interaction. Therefore, participates in the early stage of mitochondrial ATP synthase biogenesis and also protects subunit c/ATP5MC1 against intramitochondrial proteolysis. In addition, binds the mitochondrial proton-transporting ATP synthase complexes I and may play a role in the stability of its membrane-bound subassemblies. The polypeptide is Transmembrane protein 70, mitochondrial (Homo sapiens (Human)).